Here is a 518-residue protein sequence, read N- to C-terminus: Metalloprotease TIKI2 (518 aa).

Positions 1–22 (MNCQSGLRWLVTLCAFFQVGSA) are cleaved as a signal peptide. Residues 23–499 (RDTHESTRQC…SALDSAAPNP (477 aa)) are Extracellular-facing. N-linked (GlcNAc...) asparagine glycosylation is found at Asn224, Asn233, Asn282, Asn325, and Asn340. The helical transmembrane segment at 500 to 517 (TYALTCFLACLISQLLFA) threads the bilayer. A topological domain (cytoplasmic) is located at residue Ser518.

It belongs to the TIKI family. It depends on Mn(2+) as a cofactor. Co(2+) serves as cofactor.

The protein localises to the cell membrane. Functionally, metalloprotease that acts as a negative regulator of the Wnt signaling pathway by mediating the cleavage of the N-terminal residues of a subset of Wnt proteins. Following cleavage, Wnt proteins become oxidized and form large disulfide-bond oligomers, leading to their inactivation. The polypeptide is Metalloprotease TIKI2 (trabd2b) (Danio rerio (Zebrafish)).